Here is an 841-residue protein sequence, read N- to C-terminus: Probable outer membrane protein pmp2 (841 aa).

The signal sequence occupies residues Met-1–Ala-24. Residues Gly-537–Phe-841 form the Autotransporter domain.

The protein belongs to the PMP outer membrane protein family.

It localises to the secreted. The protein resides in the cell wall. It is found in the cell outer membrane. The polypeptide is Probable outer membrane protein pmp2 (pmp2) (Chlamydia pneumoniae (Chlamydophila pneumoniae)).